Consider the following 602-residue polypeptide: MSSMRTHYCGLVTEQLIGQEVALTGWVQRRRDHGGVIFIDLRDREGLVQVVCDPDRPEMFKAAEEIRNEFCIRITGKVRPRPAGTENANLTSGKIEVLCHELTVLNPSVTPPFQLDDDNLSETTRLTHRVLDLRRPQMQYNLRLRYKVAMEVRKYLDAQGFIDIETPMLGKSTPEGARDYLVPSRVNPGHFFALPQSPQIFKQMLMVSGFDRYYQITKCFRDEDLRADRQPEFTQIDCETSFLTEQEIRDLFEDMMRTVFKNAIDVDLDAKFPVMEFREAMARFGSDKPDLRVKLEFTELTEVMKDVDFKVFSGPANSDNGRVVGLRVPGGGAISRGEIDAYTQFVAIYGAKGLAWIKVNEVAKGRDGLQSPIVKNLHDAAIAEILKRTGAQDGDIIFFGADKAKIVNDAIGALRLKVGHSEFGKSTGLFEDTWKPLWVIDFPMFEYDEEDARWVAMHHPFTSPKDEHLQYLETDPGKCIAKAYDMVLNGWEMGGGSVRIYREDVQSKVFRALKINDEEARAKFGYLLDALQYGAPPHGGLAFGLDRIVTMMAGADSIRDVIAFPKTQRAQDLLTQAPSTVDEKQLRELHIRLRAQEPKTTA.

Glu-175 is an L-aspartate binding site. Positions 199-202 are aspartate; it reads QIFK. Arg-221 contributes to the L-aspartate binding site. ATP contacts are provided by residues 221–223 and Gln-230; that span reads RDE. His-458 serves as a coordination point for L-aspartate. ATP is bound at residue Glu-492. Arg-499 serves as a coordination point for L-aspartate. 544 to 547 contacts ATP; sequence GLDR.

The protein belongs to the class-II aminoacyl-tRNA synthetase family. Type 1 subfamily. Homodimer.

It is found in the cytoplasm. The enzyme catalyses tRNA(Asx) + L-aspartate + ATP = L-aspartyl-tRNA(Asx) + AMP + diphosphate. Functionally, aspartyl-tRNA synthetase with relaxed tRNA specificity since it is able to aspartylate not only its cognate tRNA(Asp) but also tRNA(Asn). Reaction proceeds in two steps: L-aspartate is first activated by ATP to form Asp-AMP and then transferred to the acceptor end of tRNA(Asp/Asn). This is Aspartate--tRNA(Asp/Asn) ligase from Cupriavidus metallidurans (strain ATCC 43123 / DSM 2839 / NBRC 102507 / CH34) (Ralstonia metallidurans).